Consider the following 311-residue polypeptide: Geranylgeranyl transferase type-2 subunit beta (311 aa).

PFTB repeat units follow at residues 54–95 (KERI…AMLD), 102–143 (KDKV…AILG), 150–191 (KNTA…KILN), 197–239 (DEEL…AIIG), and 246–288 (RNQL…SLLQ). Geranylgeranyl diphosphate-binding positions include 176–178 (HGA) and 218–230 (RPEK…YGWW). Zn(2+) is bound by residues aspartate 224, cysteine 226, and histidine 276.

It belongs to the protein prenyltransferase subunit beta family. Heterodimer of an alpha and a beta subunit. It depends on Zn(2+) as a cofactor.

It carries out the reaction geranylgeranyl diphosphate + L-cysteinyl-[protein] = S-geranylgeranyl-L-cysteinyl-[protein] + diphosphate. Catalyzes the transfer of a geranyl-geranyl moiety from geranyl-geranyl pyrophosphate to proteins having the C-terminal -XCC or -XCXC, where both cysteines may become modified. The polypeptide is Geranylgeranyl transferase type-2 subunit beta (ptb1) (Schizosaccharomyces pombe (strain 972 / ATCC 24843) (Fission yeast)).